Reading from the N-terminus, the 256-residue chain is MILEEIVNFKKEEVRKKKELKPYNELLNVNAVYRGDFKNSLNKGKVAIIGEIKRASPSKGIIREEFDLVEIAKTYEKAEVDAISVLTEKRFFKGEGGYIPQVKKLTTKPVLRKDFVIDEYQIYESKFLGADAVLLIVAILEDKLKGFCDIAKQIGLDVLVEVHEEEELETALKAGCDIIGINNRDLKTFKVDIKTTERLIKNIPKDKIVVSESGIKTPEDVLYLSSLGVKAVLIGESFMKMDEGRIKEFVKKVRGG.

Belongs to the TrpC family.

It carries out the reaction 1-(2-carboxyphenylamino)-1-deoxy-D-ribulose 5-phosphate + H(+) = (1S,2R)-1-C-(indol-3-yl)glycerol 3-phosphate + CO2 + H2O. The protein operates within amino-acid biosynthesis; L-tryptophan biosynthesis; L-tryptophan from chorismate: step 4/5. This Caldanaerobacter subterraneus subsp. tengcongensis (strain DSM 15242 / JCM 11007 / NBRC 100824 / MB4) (Thermoanaerobacter tengcongensis) protein is Indole-3-glycerol phosphate synthase.